Consider the following 401-residue polypeptide: Phosrestin-1 (401 aa).

Ser-366 carries the phosphoserine; by CaMK modification.

This sequence belongs to the arrestin family. Phosphorylated upon light exposure. As to expression, expressed in photoreceptor cells.

It localises to the cell projection. The protein resides in the rhabdomere. Its function is as follows. Regulates photoreceptor cell deactivation. Arr1 and Arr2 proteins are mediators of rhodopsin inactivation and are essential for the termination of the phototransduction cascade. Involved in regulating normal cycles of per nuclear accumulation in brain circadian neurons and thus is important for normal circadian behavior. In the dark, functions with Arr1 to promote the formation of cytosolic Bdbt foci, which are required for dco localization to photoreceptor nuclei where it phosphorylates and activates degradation of per. This Drosophila melanogaster (Fruit fly) protein is Phosrestin-1 (Arr2).